The primary structure comprises 149 residues: Calmodulin (149 aa).

Ala-2 carries the N-acetylalanine modification. 4 EF-hand domains span residues 8-43, 44-79, 81-116, and 117-149; these read EQIA…LGQN, PTEA…KMKD, DSEE…LGEK, and LTDE…MTAK. The Ca(2+) site is built by Asp-21, Asp-23, Asp-25, Thr-27, Glu-32, Asp-57, Asp-59, Asn-61, Thr-63, Glu-68, Asp-94, Asp-96, Asn-98, Tyr-100, and Glu-105. Lys-116 carries the N6,N6,N6-trimethyllysine modification. Residues Asp-130, Asp-132, Asp-134, Gln-136, and Glu-141 each contribute to the Ca(2+) site.

This sequence belongs to the calmodulin family.

Its function is as follows. Calmodulin acts as part of a calcium signal transduction pathway by mediating the control of a large number of enzymes, ion channels, aquaporins and other proteins through calcium-binding. Calcium-binding is required for the activation of calmodulin. Among the enzymes to be stimulated by the calmodulin-calcium complex are a number of protein kinases, such as myosin light-chain kinases and calmodulin-dependent protein kinase type II (CaMK2), and phosphatases. The polypeptide is Calmodulin (calm) (Oreochromis mossambicus (Mozambique tilapia)).